We begin with the raw amino-acid sequence, 879 residues long: Prostaglandin F2 receptor negative regulator (879 aa).

The first 21 residues, 1–21 (MGRPAPRPLLLALLSLAVCRG), serve as a signal peptide directing secretion. Ig-like C2-type domains lie at 22–137 (RVVR…DTVQ) and 149–263 (PSSR…QEIQ). Residues 22 to 832 (RVVRVPAGTL…MDVLNAFKYP (811 aa)) are Extracellular-facing. 2 cysteine pairs are disulfide-bonded: C43/C119 and C169/C247. A glycan (N-linked (GlcNAc...) asparagine) is linked at N44. The Cell attachment site signature appears at 89 to 91 (RGD). T271 bears the Phosphothreonine mark. 4 consecutive Ig-like C2-type domains span residues 276–389 (PTAL…WHKV), 406–536 (PEYQ…DVFS), 544–662 (ASED…AWSP), and 688–813 (PTFN…AEIH). An intrachain disulfide couples C299 to C373. N300, N383, and N413 each carry an N-linked (GlcNAc...) asparagine glycan. The Endoplasmic reticulum retention signal signature appears at 424-427 (PTEL). An intrachain disulfide couples C429 to C515. Residues N525, N600, N618, and N691 are each glycosylated (N-linked (GlcNAc...) asparagine). The cysteines at positions 571 and 655 are disulfide-linked. Positions 703–705 (RGD) match the Cell attachment site motif. A disulfide bond links C711 and C793. A helical membrane pass occupies residues 833 to 853 (LLIGVGLSTVIGLLSCLIGYC). Residues 854-879 (SSHWCCKKEVRETRRERRRLMSMEMD) lie on the Cytoplasmic side of the membrane.

Interacts with CD9 and CD81. Part of a complex composed of CD9, CD81 and IGSF8. Also seems to interact with CD63, CD82 and CD151. In terms of tissue distribution, expressed in myoblasts (at protein level).

The protein localises to the endoplasmic reticulum membrane. It is found in the golgi apparatus. It localises to the trans-Golgi network membrane. In terms of biological role, inhibits the binding of prostaglandin F2-alpha (PGF2-alpha) to its specific FP receptor, by decreasing the receptor number rather than the affinity constant. Functional coupling with the prostaglandin F2-alpha receptor seems to occur. In myoblasts, associates with tetraspanins CD9 and CD81 to prevent myotube fusion during muscle regeneration. The protein is Prostaglandin F2 receptor negative regulator (Ptgfrn) of Mus musculus (Mouse).